A 1336-amino-acid chain; its full sequence is Lysine-specific demethylase 2B (1336 aa).

Residues Met1–Lys25 are disordered. The span at Pro15–Lys25 shows a compositional bias: basic residues. Position 57 is a phosphoserine (Ser57). The 169-residue stretch at Phe178 to Asp346 folds into the JmjC domain. Thr239 is a binding site for substrate. Fe cation is bound by residues His242 and Asp244. Residue Lys259 participates in substrate binding. Residue His314 participates in Fe cation binding. Residues Met410–Glu430 are compositionally biased toward acidic residues. Residues Met410–Ala465 form a disordered region. A compositionally biased stretch (low complexity) spans Thr440–Ser451. Ser474 and Ser477 each carry phosphoserine. The residue at position 493 (Thr493) is a Phosphothreonine. The residue at position 497 (Ser497) is a Phosphoserine. The CXXC-type zinc finger occupies Ala606–Ile652. Zn(2+)-binding residues include Cys613, Cys616, Cys619, Cys624, Cys627, Cys630, Cys646, Cys651, Cys662, Cys665, Cys688, Cys691, His696, Cys699, Cys719, and Cys722. The PHD-type zinc finger occupies Thr659–Ala725. Disordered regions lie at residues Lys727 to Pro843 and Gln855 to Lys1034. Positions Lys749–His799 are enriched in basic and acidic residues. Positions Ser819–Pro843 are enriched in low complexity. Residues Lys857 and Lys890 each participate in a glycyl lysine isopeptide (Lys-Gly) (interchain with G-Cter in SUMO2) cross-link. A compositionally biased stretch (basic and acidic residues) spans Pro902–Arg911. The segment covering Lys932–Leu941 has biased composition (basic residues). Basic and acidic residues predominate over residues Pro942–Arg960. Positions Asn943–Gln971 form a coiled coil. A Phosphoserine modification is found at Ser951. Residues Thr961–Gln971 are compositionally biased toward polar residues. Residues Ser975, Ser979, Ser1018, and Ser1031 each carry the phosphoserine modification. The span at Pro1014 to Ser1024 shows a compositional bias: low complexity. The 47-residue stretch at Asp1059–Ile1105 folds into the F-box domain. 7 LRR repeats span residues Asn1093–Gly1120, Trp1133–Leu1154, Leu1156–Trp1182, Gly1222–Tyr1247, Cys1248–Asp1277, Cys1278–Tyr1302, and Cys1303–Ser1336.

It belongs to the JHDM1 histone demethylase family. In terms of assembly, interacts with SKP1, forming heterodimers. The heterodimeric KDM2B-SKP1 complex interacts with the PCGF1-BCORL1 heterodimeric complex to form a homotetrameric polycomb repression complex 1 (PRC1.1). Directly interacts with CUL1. The SKP1-KDM2B complex interacts with UBB. The cofactor is Fe(2+).

It localises to the nucleus. The protein localises to the nucleolus. Its subcellular location is the chromosome. It carries out the reaction N(6),N(6)-dimethyl-L-lysyl(36)-[histone H3] + 2 2-oxoglutarate + 2 O2 = L-lysyl(36)-[histone H3] + 2 formaldehyde + 2 succinate + 2 CO2. Its activity is regulated as follows. Histone demethylase activity is inhibited by fumarate. Its function is as follows. Histone demethylase that demethylates 'Lys-4' and 'Lys-36' of histone H3, thereby playing a central role in histone code. Preferentially demethylates trimethylated H3 'Lys-4' and dimethylated H3 'Lys-36' residue while it has weak or no activity for mono- and tri-methylated H3 'Lys-36'. Preferentially binds the transcribed region of ribosomal RNA and represses the transcription of ribosomal RNA genes which inhibits cell growth and proliferation. May also serve as a substrate-recognition component of the SCF (SKP1-CUL1-F-box protein)-type E3 ubiquitin ligase complex. This chain is Lysine-specific demethylase 2B (KDM2B), found in Homo sapiens (Human).